Consider the following 618-residue polypeptide: MQQPLIILGIGIVLALVSNVESGVLRKPVDEHEYEKWTNARGNEAAVPPPKYKMLRYAKKAINEPENRKMSCLFCTFAVDGVQALIAQNSTDNEIAAFLVNLCDLFDVEQPHVCKNIIYAFKDEVVFVLERSVFTPEEICGAFIANCGHSDKPLTHMWNITIPGGKPPIKPWPKIPDNKPTFKVLHLSDIHIDHQYVVGTEAYCQLDSALGTYAMCCRDYSQDSQGAPTNLKDKPIYVPAGPWGMPYLCDLPYQTFESAMKHISKTFKDLDYIIITGDFEAHDSWDYTEDLTRENMNNMTNVFLEYFPGVPVYVSIGNHEGVPQDAMAPHTMPEYDTRGPQWLYKIMSEMWSHWIPQEALDTVQYRASYAVYPKPGLKLISLNTIYCSEFNFYLYVNEVDPDATLEWLIEELQDSENKGELVHIISHIPPGDNYCLKGWSWNFFEIVKRYENTIAQMFYGHTHYDQFMVYYDMDDPNRRPFHFNWISPSLTTYDWLNPAYRIYEIDGGYEGATYTVKDAKTYFANVTEANMKNKEPEWVLSYDTREHYQMADFSPQSWSDLSDKLWTNTTLFRDYVRLYYRNHYNNECYTDYKCRYTFVCDIKKGRSYDESFCDHLTK.

The N-terminal stretch at 1–22 (MQQPLIILGIGIVLALVSNVES) is a signal peptide. The Saposin B-type domain occupies 68 to 151 (RKMSCLFCTF…AFIANCGHSD (84 aa)). Intrachain disulfides connect cysteine 72–cysteine 147, cysteine 75–cysteine 140, and cysteine 103–cysteine 114. Residue asparagine 89 is glycosylated (N-linked (GlcNAc...) asparagine). Residue asparagine 159 is glycosylated (N-linked (GlcNAc...) asparagine). Aspartate 189 and histidine 191 together coordinate Zn(2+). Cystine bridges form between cysteine 204–cysteine 216 and cysteine 217–cysteine 249. Position 278 (aspartate 278) interacts with Zn(2+). Asparagine 298 carries N-linked (GlcNAc...) asparagine glycosylation. Zn(2+)-binding residues include asparagine 318, histidine 427, histidine 461, and histidine 463. Cysteines 387 and 435 form a disulfide. N-linked (GlcNAc...) asparagine glycosylation is found at asparagine 525 and asparagine 568. 2 cysteine pairs are disulfide-bonded: cysteine 588–cysteine 594 and cysteine 600–cysteine 613.

It belongs to the acid sphingomyelinase family. The cofactor is Zn(2+).

The protein localises to the secreted. It carries out the reaction a sphingomyelin + H2O = phosphocholine + an N-acylsphing-4-enine + H(+). It catalyses the reaction an N-acyl-15-methylhexadecasphing-4-enine-1-phosphocholine + H2O = an N-acyl-15-methylhexadecasphing-4-enine + phosphocholine + H(+). It functions in the pathway lipid metabolism; sphingolipid metabolism. Sphingomyelin phosphodiesterase (sphingomyelinase) that converts sphingomyelin (N-acyl-sphingoid-1-phosphocholine) to ceramide (N-acyl-sphingoid base) and phosphocholine at acidic pH. Displays its enzymatic activity when secreted. May play distinct roles in signaling. This is Sphingomyelin phosphodiesterase 2 (asm-2) from Caenorhabditis elegans.